Reading from the N-terminus, the 165-residue chain is MIRGFFLILLFLLLAFFSENYVRSLEKLKEEITVRSELKGVEIQLYGEKGLEWRIQGKTLTYADNQVVINEPVIRTQDYTITSEKLYMNKKTRKGRLEGNVEIRGPNLYLRTTNAYIDLVKNISWGYNELILRKDTNVIKGRGFKIFFKPFKVQINEVESIHTTS.

Residues Met1–Phe17 form the signal peptide.

This is an uncharacterized protein from Aquifex aeolicus (strain VF5).